Reading from the N-terminus, the 496-residue chain is Chromosomal replication initiator protein DnaA (496 aa).

A domain I, interacts with DnaA modulators region spans residues 1–76; the sequence is MKMDSAVSEE…TELWQEENPQ (76 aa). Residues 76-150 form a domain II region; it reads QILKVEVVVR…AAATDAVLGS (75 aa). Residues 151–373 are domain III, AAA+ region; it reads PLDPRYTFDT…GAFNQLLFRQ (223 aa). ATP-binding residues include G197, G199, K200, and T201. The interval 374 to 496 is domain IV, binds dsDNA; sequence SFEPNISIDR…LKRLINDQAA (123 aa).

This sequence belongs to the DnaA family. As to quaternary structure, oligomerizes as a right-handed, spiral filament on DNA at oriC.

Its subcellular location is the cytoplasm. Functionally, plays an essential role in the initiation and regulation of chromosomal replication. ATP-DnaA binds to the origin of replication (oriC) to initiate formation of the DNA replication initiation complex once per cell cycle. Binds the DnaA box (a 9 base pair repeat at the origin) and separates the double-stranded (ds)DNA. Forms a right-handed helical filament on oriC DNA; dsDNA binds to the exterior of the filament while single-stranded (ss)DNA is stabiized in the filament's interior. The ATP-DnaA-oriC complex binds and stabilizes one strand of the AT-rich DNA unwinding element (DUE), permitting loading of DNA polymerase. After initiation quickly degrades to an ADP-DnaA complex that is not apt for DNA replication. Binds acidic phospholipids. The protein is Chromosomal replication initiator protein DnaA of Brucella suis biovar 1 (strain 1330).